Here is a 125-residue protein sequence, read N- to C-terminus: Snaclec VP12 subunit B (125 aa).

3 cysteine pairs are disulfide-bonded: cysteine 4-cysteine 15, cysteine 32-cysteine 121, and cysteine 98-cysteine 113. The 112-residue stretch at 11–122 (FEKYCYKVFQ…CNDPRYFVCK (112 aa)) folds into the C-type lectin domain.

The protein belongs to the snaclec family. In terms of assembly, heterodimer of subunits alpha and beta; disulfide-linked. Expressed by the venom gland.

Its subcellular location is the secreted. Inhibits integrin alpha-2/beta-1- (ITGA2/ITGB1) dependent melanoma metastasis. This is Snaclec VP12 subunit B from Daboia palaestinae (Palestine viper).